A 122-amino-acid polypeptide reads, in one-letter code: N(2)-fixation sustaining protein CowN (122 aa).

It belongs to the CowN family.

In terms of biological role, is required to sustain N(2)-dependent growth in the presence of low levels of carbon monoxide (CO). Probably acts by protecting the N(2) fixation ability of the nitrogenase complex, which is inactivated in the presence of CO. This is N(2)-fixation sustaining protein CowN from Azorhizobium caulinodans (strain ATCC 43989 / DSM 5975 / JCM 20966 / LMG 6465 / NBRC 14845 / NCIMB 13405 / ORS 571).